A 458-amino-acid chain; its full sequence is Argininosuccinate lyase (458 aa).

This sequence belongs to the lyase 1 family. Argininosuccinate lyase subfamily.

It localises to the cytoplasm. It catalyses the reaction 2-(N(omega)-L-arginino)succinate = fumarate + L-arginine. It functions in the pathway amino-acid biosynthesis; L-arginine biosynthesis; L-arginine from L-ornithine and carbamoyl phosphate: step 3/3. In Haemophilus ducreyi (strain 35000HP / ATCC 700724), this protein is Argininosuccinate lyase.